We begin with the raw amino-acid sequence, 293 residues long: ELMO domain-containing protein 2 (293 aa).

The region spanning 126-282 (QHEELLMKLW…KFHEKIKGLL (157 aa)) is the ELMO domain.

In terms of tissue distribution, alveolar cells (morphologically type II cells) and alveolar macrophages (at protein level). Expressed in brain, colon, heart, kidney, liver, lung, muscle, placenta, small intestine, spleen, stomach and testis. In lung it is expressed in alveolar macrophages and alveolar walls.

Functionally, acts as a GTPase-activating protein (GAP) toward guanine nucleotide exchange factors like ARL2, ARL3, ARF1 and ARF6, but not for GTPases outside the Arf family. Regulates IFN-related antiviral responses. The sequence is that of ELMO domain-containing protein 2 (ELMOD2) from Homo sapiens (Human).